A 444-amino-acid chain; its full sequence is Protein CPn_0808/CP_1063/CPj0808/CpB0837 (444 aa).

Over residues Met1 to Pro13 the composition is skewed to polar residues. The disordered stretch occupies residues Met1–Thr124. Residues Leu15–Gln24 show a composition bias toward low complexity. Positions Lys25–Gly42 are enriched in polar residues. A compositionally biased stretch (basic and acidic residues) spans Ser77–Gly86. Residues Ser88–Ala103 are compositionally biased toward low complexity. The segment covering Arg113 to Thr124 has biased composition (polar residues).

Belongs to the chlamydial CPn_0808/CT_579/TC_0868 family.

This Chlamydia pneumoniae (Chlamydophila pneumoniae) protein is Protein CPn_0808/CP_1063/CPj0808/CpB0837.